The primary structure comprises 447 residues: Na(+)-translocating NADH-quinone reductase subunit A (447 aa).

It belongs to the NqrA family. In terms of assembly, composed of six subunits; NqrA, NqrB, NqrC, NqrD, NqrE and NqrF.

It catalyses the reaction a ubiquinone + n Na(+)(in) + NADH + H(+) = a ubiquinol + n Na(+)(out) + NAD(+). In terms of biological role, NQR complex catalyzes the reduction of ubiquinone-1 to ubiquinol by two successive reactions, coupled with the transport of Na(+) ions from the cytoplasm to the periplasm. NqrA to NqrE are probably involved in the second step, the conversion of ubisemiquinone to ubiquinol. In Tolumonas auensis (strain DSM 9187 / NBRC 110442 / TA 4), this protein is Na(+)-translocating NADH-quinone reductase subunit A.